Reading from the N-terminus, the 979-residue chain is Zinc finger BED domain-containing protein 6 (979 aa).

The required for nucleolar localization stretch occupies residues 1-89; that stretch reads MSVCTLSVPV…ILAKKFSKDL (89 aa). The BED-type 1 zinc finger occupies 130–187; sequence AKTSIVWHFFHVDPQYTWRAICNLCEKSVSRGKPGSHLGTSTLQRHLQARHSPHWTRA. Zn(2+) is bound by residues C151, C154, H175, and H180. Positions 207-232 are disordered; the sequence is PSSGSNGSFEYIPTDPLDDNRMGKKH. The BED-type 2 zinc finger occupies 264–321; that stretch reads AKTSAVWNFFYTDPQHISRAVCNICKRSVSRGRPGSHLGTSTLQRHLQATHPIHWAVA. Residues C285, C288, H309, and H314 each coordinate Zn(2+). The interval 333–383 is disordered; it reads DEAETERSDLLSDTLHGEKSTGSQDLTAEDLSDSDSDEPMLEVENRSESPI. Residues 337–351 are compositionally biased toward basic and acidic residues; sequence TERSDLLSDTLHGEK. Residues 359-373 show a composition bias toward acidic residues; it reads TAEDLSDSDSDEPML. S381 bears the Phosphoserine mark. The interval 866–948 is HATC (Hobo-Ac-Tam3) domain; that stretch reads VVDEYFKEKY…EQLMFLKMNL (83 aa).

As to expression, expressed in pancreatic islet cells (at protein level).

The protein localises to the nucleus. It localises to the nucleolus. It is found in the cytoplasm. Its function is as follows. Transcriptional repressor which binds to the consensus sequence 5'-GCTCGC-3', transcription regulation may be tissue-specific. Regulates the expression of target genes such as: IGF2, PGAP6/TMEM8, ENHO, and PIANP. Acts as a transcriptional repressor of growth factor IGF2, thereby negatively regulating postnatal growth of muscles and internal organs, especially in females. Negatively regulates myoblast differentiation and myoblast mitochondrial activity via its regulation of IGF2 transcription. Negatively regulates the cell cycle of myoblasts, potentially via transcriptional regulation of the E2F family of transcription factors such as: E2F1 and E2F2. Positively regulates the cell cycle and survival of pancreatic beta cells. Binds to the CDH2 gene and may directly repress CDH2 transcription. Probably by controlling CDH2 expression, regulates pancreatic beta cell adhesion, and formation of cell-to-cell junctions between pancreatic beta cells and neural crest stem cells. May also play a role in embryonic beta cell differentiation. May play a role in insulin sensitivity and glucose clearance. The sequence is that of Zinc finger BED domain-containing protein 6 from Homo sapiens (Human).